Consider the following 292-residue polypeptide: Acetyl-coenzyme A carboxylase carboxyl transferase subunit beta (292 aa).

Positions 36 to 292 constitute a CoA carboxyltransferase N-terminal domain; it reads MWSKCEKCAK…LLRMHEVDYE (257 aa). Positions 40, 43, 59, and 62 each coordinate Zn(2+). The segment at 40–62 adopts a C4-type zinc-finger fold; it reads CEKCAKILYTEDLRENFNVCPNC.

This sequence belongs to the AccD/PCCB family. In terms of assembly, acetyl-CoA carboxylase is a heterohexamer composed of biotin carboxyl carrier protein (AccB), biotin carboxylase (AccC) and two subunits each of ACCase subunit alpha (AccA) and ACCase subunit beta (AccD). It depends on Zn(2+) as a cofactor.

The protein resides in the cytoplasm. The enzyme catalyses N(6)-carboxybiotinyl-L-lysyl-[protein] + acetyl-CoA = N(6)-biotinyl-L-lysyl-[protein] + malonyl-CoA. It participates in lipid metabolism; malonyl-CoA biosynthesis; malonyl-CoA from acetyl-CoA: step 1/1. In terms of biological role, component of the acetyl coenzyme A carboxylase (ACC) complex. Biotin carboxylase (BC) catalyzes the carboxylation of biotin on its carrier protein (BCCP) and then the CO(2) group is transferred by the transcarboxylase to acetyl-CoA to form malonyl-CoA. The sequence is that of Acetyl-coenzyme A carboxylase carboxyl transferase subunit beta from Clostridium perfringens (strain 13 / Type A).